We begin with the raw amino-acid sequence, 352 residues long: Ribosomal RNA large subunit methyltransferase M (352 aa).

S-adenosyl-L-methionine is bound by residues S184, 217–220, D236, D256, and D272; that span reads APGG. The active-site Proton acceptor is K301.

The protein belongs to the class I-like SAM-binding methyltransferase superfamily. RNA methyltransferase RlmE family. RlmM subfamily. Monomer.

Its subcellular location is the cytoplasm. It catalyses the reaction cytidine(2498) in 23S rRNA + S-adenosyl-L-methionine = 2'-O-methylcytidine(2498) in 23S rRNA + S-adenosyl-L-homocysteine + H(+). Its function is as follows. Catalyzes the 2'-O-methylation at nucleotide C2498 in 23S rRNA. This is Ribosomal RNA large subunit methyltransferase M from Pseudomonas aeruginosa (strain UCBPP-PA14).